We begin with the raw amino-acid sequence, 144 residues long: Large ribosomal subunit protein uL15 (144 aa).

The tract at residues 1 to 53 (MRLNTLSPAEGAKHAPKRLGRGIGSGLGKTGGRGHKGQNSRSGGGVRRGFEGG) is disordered. Residues 21-31 (RGIGSGLGKTG) show a composition bias toward gly residues.

This sequence belongs to the universal ribosomal protein uL15 family. Part of the 50S ribosomal subunit.

In terms of biological role, binds to the 23S rRNA. This chain is Large ribosomal subunit protein uL15, found in Pectobacterium atrosepticum (strain SCRI 1043 / ATCC BAA-672) (Erwinia carotovora subsp. atroseptica).